The sequence spans 30 residues: GADVAHKQQSVNHLLYLVTSHYPSLDYSLL.

It belongs to the tyrosinase family. Hemocyanin subfamily. As to expression, hemolymph.

It localises to the secreted. The protein localises to the extracellular space. Its function is as follows. Hemocyanins are copper-containing oxygen carriers occurring freely dissolved in the hemolymph of many mollusks and arthropods. This chain is Hemocyanin subunit 2, found in Homarus americanus (American lobster).